Here is a 288-residue protein sequence, read N- to C-terminus: Heme oxygenase 1 (288 aa).

Topologically, residues 1–265 (MERPQPDSMP…KTPLNTHSQA (265 aa)) are cytoplasmic. Heme b is bound by residues lysine 18, histidine 25, tyrosine 134, and arginine 183. The tract at residues 223 to 260 (HDTKDQSPSRAPGLRQRASNKAQDSAPVETPRGKTPLN) is disordered. At serine 229 the chain carries Phosphoserine. The chain crosses the membrane as a helical; Anchor for type IV membrane protein span at residues 266–288 (PLLRWVLTLSFLVATVAVGLYAM).

This sequence belongs to the heme oxygenase family. As to quaternary structure, homodimer and higher order homooligomer. Oligomerization is crucial for its stability and function in the endoplasmic reticulum. Interacts with FLVCR2; this interaction is potentiated in the presence of heme. In terms of processing, a soluble form arises by proteolytic removal of the membrane anchor.

The protein resides in the endoplasmic reticulum membrane. It catalyses the reaction heme b + 3 reduced [NADPH--hemoprotein reductase] + 3 O2 = biliverdin IXalpha + CO + Fe(2+) + 3 oxidized [NADPH--hemoprotein reductase] + 3 H2O + H(+). Catalyzes the oxidative cleavage of heme at the alpha-methene bridge carbon, released as carbon monoxide (CO), to generate biliverdin IXalpha, while releasing the central heme iron chelate as ferrous iron. Affords protection against programmed cell death and this cytoprotective effect relies on its ability to catabolize free heme and prevent it from sensitizing cells to undergo apoptosis. Functionally, catalyzes the oxidative cleavage of heme at the alpha-methene bridge carbon, released as carbon monoxide (CO), to generate biliverdin IXalpha, while releasing the central heme iron chelate as ferrous iron. This is Heme oxygenase 1 (HMOX1) from Pongo abelii (Sumatran orangutan).